Here is a 556-residue protein sequence, read N- to C-terminus: Formate--tetrahydrofolate ligase 1 (556 aa).

Residue 65 to 72 (TPAGEGKS) coordinates ATP.

This sequence belongs to the formate--tetrahydrofolate ligase family.

It carries out the reaction (6S)-5,6,7,8-tetrahydrofolate + formate + ATP = (6R)-10-formyltetrahydrofolate + ADP + phosphate. It functions in the pathway one-carbon metabolism; tetrahydrofolate interconversion. This chain is Formate--tetrahydrofolate ligase 1, found in Streptococcus pyogenes serotype M4 (strain MGAS10750).